Here is a 286-residue protein sequence, read N- to C-terminus: 3-hydroxyanthranilate 3,4-dioxygenase (286 aa).

Residues Met-1–Asn-160 are domain A (catalytic). Position 43 (Arg-43) interacts with O2. Residues His-47, Glu-53, and His-91 each coordinate Fe cation. Glu-53 lines the substrate pocket. Substrate is bound by residues Arg-95 and Glu-105. The tract at residues Pro-161–Val-177 is linker. The domain B stretch occupies residues Met-178 to Gly-286.

It belongs to the 3-HAO family. In terms of assembly, monomer. Requires Fe(2+) as cofactor.

It is found in the cytoplasm. It localises to the cytosol. The enzyme catalyses 3-hydroxyanthranilate + O2 = (2Z,4Z)-2-amino-3-carboxymuconate 6-semialdehyde. The protein operates within cofactor biosynthesis; NAD(+) biosynthesis; quinolinate from L-kynurenine: step 3/3. Its function is as follows. Catalyzes the oxidative ring opening of 3-hydroxyanthranilate to 2-amino-3-carboxymuconate semialdehyde, which spontaneously cyclizes to quinolinate. This chain is 3-hydroxyanthranilate 3,4-dioxygenase, found in Bos taurus (Bovine).